Here is a 150-residue protein sequence, read N- to C-terminus: UPF0540 protein At1g62080 (150 aa).

An N-terminal signal peptide occupies residues Met1–Ala21. The segment covering Ala119–Lys135 has biased composition (low complexity). A disordered region spans residues Ala119 to Asp150.

The protein belongs to the UPF0540 family.

The sequence is that of UPF0540 protein At1g62080 from Arabidopsis thaliana (Mouse-ear cress).